Here is a 1142-residue protein sequence, read N- to C-terminus: E3 ubiquitin-protein ligase TRIM33 (1142 aa).

Gly residues predominate over residues 1 to 18 (MAENKGGGEAESGGGGSG). The segment at 1–132 (MAENKGGGEA…PGSSSGPPLG (132 aa)) is disordered. Positions 1–163 (MAENKGGGEA…AEPKLLPCLH (163 aa)) are necessary for E3 ubiquitin-protein ligase activity and repression of SMAD4 signaling and transcriptional repression. Low complexity predominate over residues 19-42 (SAPVTAGAAGPTAQEAEPPLAAVL). Over residues 52–64 (RAGAEGGAAGPDD) the composition is skewed to gly residues. The segment covering 65–99 (GGVAAASSSSAPAASVPAASVGSAVPGGAASTPAP) has biased composition (low complexity). The span at 100 to 122 (AAAPAPAPAPAPAPAPAPAPAPA) shows a compositional bias: pro residues. Residues 141–201 (CAVCQQSLQS…VGVIRCPVCR (61 aa)) form an RING-type zinc finger. B box-type zinc fingers lie at residues 228-275 (KSEQ…IRKK) and 287-328 (QRPV…YQFL). 8 residues coordinate Zn(2+): Cys233, Cys236, Cys257, His261, Cys292, His295, Cys315, and His320. The interval 315 to 417 (CQLLEHKEHR…QMKLLQQQND (103 aa)) is necessary for oligomerization. Residues 315–417 (CQLLEHKEHR…QMKLLQQQND (103 aa)) are a coiled coil. Residues Lys345, Lys350, Lys497, and Lys520 each participate in a glycyl lysine isopeptide (Lys-Gly) (interchain with G-Cter in SUMO2) cross-link. Arg531 carries the asymmetric dimethylarginine; alternate modification. The residue at position 531 (Arg531) is an Omega-N-methylarginine; alternate. Lys543 participates in a covalent cross-link: Glycyl lysine isopeptide (Lys-Gly) (interchain with G-Cter in SUMO2). Position 551 is an omega-N-methylarginine (Arg551). Residue Arg593 is modified to Asymmetric dimethylarginine. Arg607 carries the asymmetric dimethylarginine; alternate modification. Position 607 is an omega-N-methylarginine; alternate (Arg607). An asymmetric dimethylarginine mark is found at Arg614 and Arg620. 3 disordered regions span residues 657–676 (PTSP…TSPS), 688–707 (NPEN…EDAG), and 718–834 (YISG…PPLS). Residues 738–774 (PSALSPGSSGLSNSHTPVRPPSTSSTGSRGSCGSSGR) are compositionally biased toward low complexity. Composition is skewed to basic and acidic residues over residues 775 to 794 (TAEK…KQEP) and 808 to 817 (KQEKTEDGRR). N6-acetyllysine; alternate is present on residues Lys778 and Lys784. Residues Lys778 and Lys784 each participate in a glycyl lysine isopeptide (Lys-Gly) (interchain with G-Cter in SUMO2); alternate cross-link. A Glycyl lysine isopeptide (Lys-Gly) (interchain with G-Cter in SUMO2) cross-link involves residue Lys789. Residues Lys791 and Lys808 each participate in a glycyl lysine isopeptide (Lys-Gly) (interchain with G-Cter in SUMO2); alternate cross-link. Residues Lys791 and Lys808 each participate in a glycyl lysine isopeptide (Lys-Gly) (interchain with G-Cter in SUMO1); alternate cross-link. Position 808 is an N6-acetyllysine; alternate (Lys808). Lys811 is covalently cross-linked (Glycyl lysine isopeptide (Lys-Gly) (interchain with G-Cter in SUMO2)). Phosphoserine is present on Ser818. Over residues 822–834 (LSSPESSLTPPLS) the composition is skewed to low complexity. Thr830 bears the Phosphothreonine mark. Residue Lys876 forms a Glycyl lysine isopeptide (Lys-Gly) (interchain with G-Cter in SUMO2) linkage. Ser877 is modified (phosphoserine). The segment at 902–949 (EDWCAVCQNGGDLLCCEKCPKVFHLTCHVPTLLSFPSGDWICTFCRDI) adopts a PHD-type zinc-finger fold. Lys966 is subject to N6-acetyllysine. Lys968 bears the N6-acetyllysine; alternate mark. Lys968 is covalently cross-linked (Glycyl lysine isopeptide (Lys-Gly) (interchain with G-Cter in SUMO2); alternate). Residues 972–1095 (GLSPVDQRKC…LYFEDKLSEI (124 aa)) enclose the Bromo domain. Residues Lys1022 and Lys1058 each participate in a glycyl lysine isopeptide (Lys-Gly) (interchain with G-Cter in SUMO2) cross-link. Thr1066 is subject to Phosphothreonine. Lys1072 is covalently cross-linked (Glycyl lysine isopeptide (Lys-Gly) (interchain with G-Cter in SUMO2)). The disordered stretch occupies residues 1103-1142 (PLPEFEQDEDDGEVTEDSDEDFIQPRRKRLKSDERPVHIK). The segment covering 1107 to 1124 (FEQDEDDGEVTEDSDEDF) has biased composition (acidic residues). Position 1117 is a phosphothreonine (Thr1117). Position 1120 is a phosphoserine (Ser1120). A Glycyl lysine isopeptide (Lys-Gly) (interchain with G-Cter in SUMO2) cross-link involves residue Lys1133. The span at 1133–1142 (KSDERPVHIK) shows a compositional bias: basic and acidic residues. Ser1134 bears the Phosphoserine mark.

The protein belongs to the TRIM/RBCC family. In terms of assembly, homooligomer and heterooligomer with TRIM24 and TRIM28 family members. Interacts with SMAD4 in unstimulated cells. Found in a complex with SMAD2 and SMAD3 upon addition of TGF-beta. Interacts with SMAD2 and SMAD3. Interacts with SMAD4 under basal and induced conditions and, upon TGF-beta signaling, with activated SMAD2. Forms a ternary complex with SMAD4 and SMAD2 upon TGF-beta signaling. Sumoylated with SUMO1. As to expression, ubiquitous with high level in testis.

Its subcellular location is the nucleus. The catalysed reaction is S-ubiquitinyl-[E2 ubiquitin-conjugating enzyme]-L-cysteine + [acceptor protein]-L-lysine = [E2 ubiquitin-conjugating enzyme]-L-cysteine + N(6)-ubiquitinyl-[acceptor protein]-L-lysine.. It participates in protein modification; protein ubiquitination. Acts as an E3 ubiquitin-protein ligase. Promotes SMAD4 ubiquitination, nuclear exclusion and degradation via the ubiquitin proteasome pathway. May act as a transcriptional repressor. Inhibits the transcriptional response to TGF-beta/BMP signaling cascade. Plays a role in the control of cell proliferation. Its association with SMAD2 and SMAD3 stimulates erythroid differentiation of hematopoietic stem/progenitor. Monoubiquitinates SMAD4 and acts as an inhibitor of SMAD4-dependent TGF-beta/BMP signaling cascade (Monoubiquitination of SMAD4 hampers its ability to form a stable complex with activated SMAD2/3 resulting in inhibition of TGF-beta/BMP signaling cascade). This chain is E3 ubiquitin-protein ligase TRIM33 (Trim33), found in Mus musculus (Mouse).